Here is an 809-residue protein sequence, read N- to C-terminus: 3',5'-cyclic-AMP phosphodiesterase 4D (809 aa).

The tract at residues 1–107 (MEAEGSSAPA…SGATGRVRHR (107 aa)) is disordered. Phosphoserine is present on residues His54, Pro59, and Pro63. Residues 58–89 (PPPPPPSPQPQPQCPLQPPPPPPLPPPPPPPG) show a composition bias toward pro residues. The span at 90–102 (AARGRYASSGATG) shows a compositional bias: low complexity. Phosphoserine is present on residues Ser142, Ser299, Ser301, Ser348, and Ser375. The disordered stretch occupies residues 343 to 364 (EVEIPSPTQKEKEKKKRPMSQI). The 330-residue stretch at 386–715 (VKTEQEDVLA…EWYQSTIPQS (330 aa)) folds into the PDEase domain. A Glycyl lysine isopeptide (Lys-Gly) (interchain with G-Cter in SUMO) cross-link involves residue Lys387. Catalysis depends on His462, which acts as the Proton donor. His462 contacts 3',5'-cyclic AMP. His462 is a binding site for AMP. 4 residues coordinate Zn(2+): His466, His502, Asp503, and Asp620. Positions 503, 620, 623, 671, and 674 each coordinate AMP. Residue Asp503 participates in Mg(2+) binding. Asp503 lines the Mn(2+) pocket. Residues Gln671 and Phe674 each contribute to the 3',5'-cyclic AMP site. 2 disordered regions span residues 710–729 (STIPQSPSPAPDDPEEGRQG) and 739–809 (TLEE…SPDT). The segment covering 762–773 (CSDSKTLCTQDS) has biased composition (polar residues). Acidic residues predominate over residues 779-796 (PLDEQVEEEAVGEEEESQ).

The protein belongs to the cyclic nucleotide phosphodiesterase family. PDE4 subfamily. In terms of assembly, homodimer for the long isoforms. Isoforms with truncated N-termini are monomeric. Isoform 3 is part of a ternary complex containing PRKAR2A, PRKAR2B and AKAP9. Interacts with PDE4DIP. Identified in a complex composed of RYR1, PDE4D, PKA, FKBP1A and protein phosphatase 1 (PP1). Isoform 5, isoform N3 and isoform 12 bind RACK1 via their unique N-terminus. Binds ARRB2. Interacts (via N-terminal region) with SHANK2 (via proline-rich region); the interaction is increased in a PKA-dependent manner. Requires Zn(2+) as cofactor. Mg(2+) is required as a cofactor. The cofactor is Mn(2+). Post-translationally, long isoforms that share a conserved PKA phosphorylation site in the N-terminus are activated by PKA through phosphorylation. Isoform 3 and isoform 7 are activated by phosphorylation (in vitro), but not isoform 6. Isoform N3 and isoform 12 are phosphorylated on Ser-49, Ser-51, Ser-55 and Ser-59. Sumoylation of long isoforms by PIAS4 augments their activation by PKA phosphorylation and represses their inhibition by ERK phosphorylation. In terms of tissue distribution, expressed in colonic epithelial cells (at protein level). Widespread; most abundant in skeletal muscle. As to expression, detected in brain. Detected in brain, placenta, lung and kidney. In terms of tissue distribution, detected in heart and skeletal muscle.

The protein resides in the apical cell membrane. It is found in the cytoplasm. It localises to the membrane. The protein localises to the cytoskeleton. Its subcellular location is the microtubule organizing center. The protein resides in the centrosome. It catalyses the reaction 3',5'-cyclic AMP + H2O = AMP + H(+). It participates in purine metabolism; 3',5'-cyclic AMP degradation; AMP from 3',5'-cyclic AMP: step 1/1. Inhibited by rolipram. Activated by phosphatidic acid. Its function is as follows. Hydrolyzes the second messenger cAMP, which is a key regulator of many important physiological processes. The protein is 3',5'-cyclic-AMP phosphodiesterase 4D of Homo sapiens (Human).